Consider the following 259-residue polypeptide: Putative zinc metalloprotease Rip2 (259 aa).

2 helical membrane-spanning segments follow: residues 14 to 34 and 39 to 59; these read PIFL…WIAA and PLSY…SLCL. H60 is a binding site for Zn(2+). E61 is a catalytic residue. H64 contacts Zn(2+). 4 helical membrane passes run 96 to 116, 129 to 149, 159 to 179, and 203 to 223; these read LGLP…GAVY, IVSL…LGLT, VFWS…VLNL, and LAPA…TPAL.

Belongs to the peptidase M50B family. It depends on Zn(2+) as a cofactor.

The protein resides in the cell membrane. The chain is Putative zinc metalloprotease Rip2 (rip2) from Mycolicibacterium smegmatis (strain ATCC 700084 / mc(2)155) (Mycobacterium smegmatis).